Reading from the N-terminus, the 139-residue chain is uncharacterized protein (139 aa).

The 133-residue stretch at M1–K133 folds into the Globin domain.

It belongs to the globin family.

This is an uncharacterized protein from Aquifex aeolicus (strain VF5).